A 248-amino-acid polypeptide reads, in one-letter code: Ribonuclease PH (248 aa).

Phosphate is bound by residues Arg-86 and 124–126 (GTR).

Belongs to the RNase PH family. As to quaternary structure, homohexameric ring arranged as a trimer of dimers.

The catalysed reaction is tRNA(n+1) + phosphate = tRNA(n) + a ribonucleoside 5'-diphosphate. Functionally, phosphorolytic 3'-5' exoribonuclease that plays an important role in tRNA 3'-end maturation. Removes nucleotide residues following the 3'-CCA terminus of tRNAs; can also add nucleotides to the ends of RNA molecules by using nucleoside diphosphates as substrates, but this may not be physiologically important. Probably plays a role in initiation of 16S rRNA degradation (leading to ribosome degradation) during starvation. The polypeptide is Ribonuclease PH (Clostridium kluyveri (strain NBRC 12016)).